The following is a 452-amino-acid chain: UPF0210 protein Ccel_1722 (452 aa).

It belongs to the UPF0210 family. As to quaternary structure, homodimer.

This is UPF0210 protein Ccel_1722 from Ruminiclostridium cellulolyticum (strain ATCC 35319 / DSM 5812 / JCM 6584 / H10) (Clostridium cellulolyticum).